Consider the following 173-residue polypeptide: Shikimate kinase 1 (173 aa).

An ATP-binding site is contributed by 14–19 (GAGKST). Serine 18 contacts Mg(2+). Substrate is bound by residues aspartate 36, arginine 60, and glycine 82. Arginine 120 contributes to the ATP binding site. Arginine 140 is a binding site for substrate. ATP is bound at residue glutamine 157.

This sequence belongs to the shikimate kinase family. Monomer. The cofactor is Mg(2+).

The protein localises to the cytoplasm. It carries out the reaction shikimate + ATP = 3-phosphoshikimate + ADP + H(+). It participates in metabolic intermediate biosynthesis; chorismate biosynthesis; chorismate from D-erythrose 4-phosphate and phosphoenolpyruvate: step 5/7. In terms of biological role, catalyzes the specific phosphorylation of the 3-hydroxyl group of shikimic acid using ATP as a cosubstrate. The protein is Shikimate kinase 1 of Yersinia pseudotuberculosis serotype O:1b (strain IP 31758).